Here is a 142-residue protein sequence, read N- to C-terminus: Large ribosomal subunit protein uL11 (142 aa).

Belongs to the universal ribosomal protein uL11 family. Part of the ribosomal stalk of the 50S ribosomal subunit. Interacts with L10 and the large rRNA to form the base of the stalk. L10 forms an elongated spine to which L12 dimers bind in a sequential fashion forming a multimeric L10(L12)X complex. Post-translationally, one or more lysine residues are methylated.

In terms of biological role, forms part of the ribosomal stalk which helps the ribosome interact with GTP-bound translation factors. The protein is Large ribosomal subunit protein uL11 of Mycobacterium sp. (strain JLS).